The primary structure comprises 252 residues: Hydroxyacylglutathione hydrolase (252 aa).

Zn(2+)-binding residues include His-54, His-56, Asp-58, His-59, His-111, Asp-128, and His-166.

Belongs to the metallo-beta-lactamase superfamily. Glyoxalase II family. As to quaternary structure, monomer. Zn(2+) is required as a cofactor.

It catalyses the reaction an S-(2-hydroxyacyl)glutathione + H2O = a 2-hydroxy carboxylate + glutathione + H(+). It participates in secondary metabolite metabolism; methylglyoxal degradation; (R)-lactate from methylglyoxal: step 2/2. Thiolesterase that catalyzes the hydrolysis of S-D-lactoyl-glutathione to form glutathione and D-lactic acid. This is Hydroxyacylglutathione hydrolase from Aliivibrio fischeri (strain MJ11) (Vibrio fischeri).